A 154-amino-acid chain; its full sequence is Cytochrome c oxidase subunit 5A, mitochondrial (154 aa).

The N-terminal 45 residues, 1–45 (MLAAALRRCXASVRVLLPKPGAAAPSSWSSSAFRATAAIQSVRCY), are a transit peptide targeting the mitochondrion. The SIFI-degron motif lies at 2–21 (LAAALRRCXASVRVLLPKPG). 2 positions are modified to N6-acetyllysine: K91 and K117. A Phosphothreonine modification is found at T145.

Belongs to the cytochrome c oxidase subunit 5A family. In terms of assembly, component of the cytochrome c oxidase (complex IV, CIV), a multisubunit enzyme composed of 14 subunits. The complex is composed of a catalytic core of 3 subunits MT-CO1, MT-CO2 and MT-CO3, encoded in the mitochondrial DNA, and 11 supernumerary subunits COX4I, COX5A, COX5B, COX6A, COX6B, COX6C, COX7A, COX7B, COX7C, COX8 and NDUFA4, which are encoded in the nuclear genome. The complex exists as a monomer or a dimer and forms supercomplexes (SCs) in the inner mitochondrial membrane with NADH-ubiquinone oxidoreductase (complex I, CI) and ubiquinol-cytochrome c oxidoreductase (cytochrome b-c1 complex, complex III, CIII), resulting in different assemblies (supercomplex SCI(1)III(2)IV(1) and megacomplex MCI(2)III(2)IV(2)). Interacts with AFG1L. Interacts with RAB5IF. In terms of processing, in response to mitochondrial stress, the precursor protein is ubiquitinated by the SIFI complex in the cytoplasm before mitochondrial import, leading to its degradation. Within the SIFI complex, UBR4 initiates ubiquitin chain that are further elongated or branched by KCMF1.

It is found in the mitochondrion inner membrane. Its pathway is energy metabolism; oxidative phosphorylation. Component of the cytochrome c oxidase, the last enzyme in the mitochondrial electron transport chain which drives oxidative phosphorylation. The respiratory chain contains 3 multisubunit complexes succinate dehydrogenase (complex II, CII), ubiquinol-cytochrome c oxidoreductase (cytochrome b-c1 complex, complex III, CIII) and cytochrome c oxidase (complex IV, CIV), that cooperate to transfer electrons derived from NADH and succinate to molecular oxygen, creating an electrochemical gradient over the inner membrane that drives transmembrane transport and the ATP synthase. Cytochrome c oxidase is the component of the respiratory chain that catalyzes the reduction of oxygen to water. Electrons originating from reduced cytochrome c in the intermembrane space (IMS) are transferred via the dinuclear copper A center (CU(A)) of subunit 2 and heme A of subunit 1 to the active site in subunit 1, a binuclear center (BNC) formed by heme A3 and copper B (CU(B)). The BNC reduces molecular oxygen to 2 water molecules using 4 electrons from cytochrome c in the IMS and 4 protons from the mitochondrial matrix. The chain is Cytochrome c oxidase subunit 5A, mitochondrial (COX5A) from Notamacropus parma (Parma wallaby).